The primary structure comprises 242 residues: Purine nucleoside phosphorylase PA4543 (242 aa).

3 residues coordinate Zn(2+): His-69, Cys-103, and His-120.

The protein belongs to the purine nucleoside phosphorylase YfiH/LACC1 family. As to quaternary structure, homodimer. Cu(2+) serves as cofactor. Zn(2+) is required as a cofactor.

The catalysed reaction is adenosine + phosphate = alpha-D-ribose 1-phosphate + adenine. It carries out the reaction S-methyl-5'-thioadenosine + phosphate = 5-(methylsulfanyl)-alpha-D-ribose 1-phosphate + adenine. It catalyses the reaction inosine + phosphate = alpha-D-ribose 1-phosphate + hypoxanthine. The enzyme catalyses adenosine + H2O + H(+) = inosine + NH4(+). Functionally, purine nucleoside enzyme that catalyzes the phosphorolysis of adenosine and inosine nucleosides, yielding D-ribose 1-phosphate and the respective free bases, adenine and hypoxanthine. Also catalyzes the phosphorolysis of S-methyl-5'-thioadenosine into adenine and S-methyl-5-thio-alpha-D-ribose 1-phosphate. Also has adenosine deaminase activity. The polypeptide is Purine nucleoside phosphorylase PA4543 (Pseudomonas aeruginosa (strain ATCC 15692 / DSM 22644 / CIP 104116 / JCM 14847 / LMG 12228 / 1C / PRS 101 / PAO1)).